The primary structure comprises 182 residues: Large ribosomal subunit protein bL25 (182 aa).

This sequence belongs to the bacterial ribosomal protein bL25 family. CTC subfamily. As to quaternary structure, part of the 50S ribosomal subunit; part of the 5S rRNA/L5/L18/L25 subcomplex. Contacts the 5S rRNA. Binds to the 5S rRNA independently of L5 and L18.

Functionally, this is one of the proteins that binds to the 5S RNA in the ribosome where it forms part of the central protuberance. The polypeptide is Large ribosomal subunit protein bL25 (Borrelia hermsii (strain HS1 / DAH)).